A 163-amino-acid polypeptide reads, in one-letter code: Oocyte-secreted protein 1 (163 aa).

Positions 1–21 (MKPSSGLRGLLVLFSLTWTCA) are cleaved as a signal peptide.

Belongs to the PLAC1 family. In terms of tissue distribution, oocyte-specific.

The protein localises to the secreted. Functionally, may be involved in cell differentiation. This chain is Oocyte-secreted protein 1 (OOSP1), found in Bos taurus (Bovine).